The chain runs to 309 residues: Probable manganese-dependent inorganic pyrophosphatase (309 aa).

Mn(2+)-binding residues include His9, Asp13, Asp15, Asp75, His97, and Asp149.

It belongs to the PPase class C family. Mn(2+) serves as cofactor.

The protein localises to the cytoplasm. It catalyses the reaction diphosphate + H2O = 2 phosphate + H(+). The chain is Probable manganese-dependent inorganic pyrophosphatase from Bacillus cereus (strain B4264).